The chain runs to 191 residues: 2-amino-4-hydroxy-6-hydroxymethyldihydropteridine pyrophosphokinase (191 aa).

It belongs to the HPPK family.

It catalyses the reaction 6-hydroxymethyl-7,8-dihydropterin + ATP = (7,8-dihydropterin-6-yl)methyl diphosphate + AMP + H(+). Its pathway is cofactor biosynthesis; tetrahydrofolate biosynthesis; 2-amino-4-hydroxy-6-hydroxymethyl-7,8-dihydropteridine diphosphate from 7,8-dihydroneopterin triphosphate: step 4/4. In terms of biological role, catalyzes the transfer of pyrophosphate from adenosine triphosphate (ATP) to 6-hydroxymethyl-7,8-dihydropterin, an enzymatic step in folate biosynthesis pathway. In Mycobacterium leprae (strain TN), this protein is 2-amino-4-hydroxy-6-hydroxymethyldihydropteridine pyrophosphokinase (folK).